A 120-amino-acid polypeptide reads, in one-letter code: Aspartate 1-decarboxylase (120 aa).

Ser-25 acts as the Schiff-base intermediate with substrate; via pyruvic acid in catalysis. Ser-25 bears the Pyruvic acid (Ser) mark. Thr-57 contacts substrate. Tyr-58 acts as the Proton donor in catalysis. Gly-73–Ala-75 lines the substrate pocket.

This sequence belongs to the PanD family. In terms of assembly, heterooctamer of four alpha and four beta subunits. The cofactor is pyruvate. In terms of processing, is synthesized initially as an inactive proenzyme, which is activated by self-cleavage at a specific serine bond to produce a beta-subunit with a hydroxyl group at its C-terminus and an alpha-subunit with a pyruvoyl group at its N-terminus.

It localises to the cytoplasm. It catalyses the reaction L-aspartate + H(+) = beta-alanine + CO2. The protein operates within cofactor biosynthesis; (R)-pantothenate biosynthesis; beta-alanine from L-aspartate: step 1/1. In terms of biological role, catalyzes the pyruvoyl-dependent decarboxylation of aspartate to produce beta-alanine. In Deinococcus deserti (strain DSM 17065 / CIP 109153 / LMG 22923 / VCD115), this protein is Aspartate 1-decarboxylase.